The chain runs to 525 residues: GMP synthase [glutamine-hydrolyzing] (525 aa).

The 199-residue stretch at 9–207 (RILILDFGSQ…VQDICGCEAL (199 aa)) folds into the Glutamine amidotransferase type-1 domain. The active-site Nucleophile is the C86. Active-site residues include H181 and E183. One can recognise a GMPS ATP-PPase domain in the interval 208 to 400 (WTASNIVEDA…LGLPYDMVYR (193 aa)). ATP is bound at residue 235-241 (SGGVDSS).

In terms of assembly, homodimer.

The enzyme catalyses XMP + L-glutamine + ATP + H2O = GMP + L-glutamate + AMP + diphosphate + 2 H(+). It functions in the pathway purine metabolism; GMP biosynthesis; GMP from XMP (L-Gln route): step 1/1. Catalyzes the synthesis of GMP from XMP. This is GMP synthase [glutamine-hydrolyzing] from Pseudomonas entomophila (strain L48).